The sequence spans 153 residues: ORM1-like protein 1 (153 aa).

Residues 1 to 26 (MNVGVAHSEVNPNTRVMNSRGMWLTY) are Cytoplasmic-facing. 2 helical membrane-spanning segments follow: residues 27 to 46 (ALGV…FSVP) and 47 to 67 (VAWT…LHAV). Residues 68-100 (KGTPFETPDQGKARLLTHWEQLDYGVQFTSSRK) lie on the Cytoplasmic side of the membrane. Residues 101 to 121 (FLTISPIILYFLASFYTKYDP) traverse the membrane as a helical segment. At 122–123 (TH) the chain is on the extracellular side. Residues 124 to 144 (FFINTASLLSVLIPKLPQLHG) form a helical membrane-spanning segment. The Cytoplasmic segment spans residues 145-153 (VRIFGINKY).

This sequence belongs to the ORM family. Ceramide-sensitive subunit of the serine palmitoyltransferase (SPT) complex, which is also composed of SPTLC1, SPTLC2/3 and SPTSSA/B.

The protein resides in the endoplasmic reticulum membrane. Plays an essential role in the homeostatic regulation of sphingolipid de novo biosynthesis by modulating the activity of the serine palmitoyltransferase (SPT) in response to ceramide levels. When complexed to SPT, the binding of ceramides to its N-terminus stabilizes a conformation that block SPT substrate entry, hence preventing SPT catalytic activity. Through this mechanism, maintains ceramide levels at sufficient concentrations for the production of complex sphingolipids, but which prevents the accumulation of ceramides to levels that trigger apoptosis. The sequence is that of ORM1-like protein 1 (ormdl1) from Xenopus laevis (African clawed frog).